Consider the following 976-residue polypeptide: Probable basic-leucine zipper transcription factor Q (976 aa).

2 coiled-coil regions span residues 57–110 (AIDS…QYQQ) and 136–287 (QQQQ…QQQQ). The interval 104–128 (YQQQYQQPYTTPSPPDQIDYNQQLS) is disordered. Composition is skewed to polar residues over residues 374–385 (TNFNGTNNSTPN) and 393–411 (KLSS…SPPS). Residues 374–499 (TNFNGTNNST…PIDSNGDFDL (126 aa)) are disordered. Low complexity-rich tracts occupy residues 420–468 (PKNN…FNNN) and 476–490 (STTT…MTSP). The region spanning 504-567 (EKKKSISRIN…GVEVMRPEPE (64 aa)) is the bZIP domain. Residues 505 to 507 (KKK) form a basic motif region. The tract at residues 509-516 (ISRINQNL) is leucine-zipper. Low complexity predominate over residues 855-938 (ENQSNNFGNN…VNSNNNNFNN (84 aa)). Residues 855–957 (ENQSNNFGNN…SADAIPYPST (103 aa)) are disordered.

It belongs to the bZIP family.

Its subcellular location is the nucleus. Probable transcriptional regulator. The chain is Probable basic-leucine zipper transcription factor Q (bzpQ) from Dictyostelium discoideum (Social amoeba).